A 524-amino-acid polypeptide reads, in one-letter code: Fusicoccadiene C-8 hydroxylase (524 aa).

A helical transmembrane segment spans residues 16–36 (LQLLCIGPLVYACVSFIIKIV). 2 N-linked (GlcNAc...) asparagine glycosylation sites follow: Asn-126 and Asn-344. Residue Cys-465 coordinates heme. N-linked (GlcNAc...) asparagine glycosylation occurs at Asn-496.

It belongs to the cytochrome P450 family. Heme is required as a cofactor.

Its subcellular location is the membrane. It participates in mycotoxin biosynthesis. In terms of biological role, cytochrome P450 monooxygenase; part of the 2 gene clusters that mediate the biosynthesis of fusicoccins, diterpene glucosides that display phytohormone-like activity and function as potent activators of plasma membrane H(+)-ATPases in plants by modifying 14-3-3 proteins and cause the plant disease constriction canker. The first step in the pathway is performed by the fusicoccadiene synthase PaFS that possesses both prenyl transferase and terpene cyclase activity, converting isopentenyl diphosphate and dimethylallyl diphosphate into geranylgeranyl diphosphate (GGDP) and successively converting GGDP into fusicocca-2,10(14)-diene, a precursor for fusicoccin H. The second step is the oxidation at the C-8 position by the cytochrome P450 monooxygenase PaP450-2 to yield fusicocca-2,10(14)-diene-8-beta-ol. The cytochrome P450 monooxygenase PaP450-1 then catalyzes the hydroxylation at the C-16 position to produce fusicocca-2,10(14)-diene-8-beta,16-diol. The dioxygenase fc-dox then catalyzes the 16-oxydation of fusicocca-2,10(14)-diene-8-beta,16-diol to yield an aldehyde (8-beta-hydroxyfusicocca-1,10(14)-dien-16-al). The short-chain dehydrogenase/reductase fc-sdr catalyzes the reduction of the aldehyde to yield fusicocca-1,10(14)-diene-8-beta,16-diol. The next step is the hydroxylation at C-9 performed by the cytochrome P450 monooxygenase PaP450-3 that leads to fusicoccin H aglycon which is glycosylated to fusicoccin H by the O-glycosyltransferase PaGT. Hydroxylation at C-12 by the cytochrome P450 monooxygenase PaP450-4 leads then to the production of fusicoccin Q and is followed by methylation by the O-methyltransferase PaMT to yield fusicoccin P. Fusicoccin P is further converted to fusicoccin J via prenylation by the O-glucose prenyltransferase PaPT. Cytochrome P450 monooxygenase PaP450-5 then performs hydroxylation at C-19 to yield dideacetyl-fusicoccin A which is acetylated to 3'-O-deacetyl-fusicoccin A by the O-acetyltransferase PaAT-2. Finally, a another acetylation by the O-acetyltransferase PaAT-1 yields fusicoccin A. This chain is Fusicoccadiene C-8 hydroxylase, found in Phomopsis amygdali (Fusicoccum amygdali).